The sequence spans 68 residues: Large ribosomal subunit protein uL30 (68 aa).

It belongs to the universal ribosomal protein uL30 family. As to quaternary structure, part of the 50S ribosomal subunit.

In Agrobacterium fabrum (strain C58 / ATCC 33970) (Agrobacterium tumefaciens (strain C58)), this protein is Large ribosomal subunit protein uL30.